The sequence spans 270 residues: CASP-like protein 4A1 (270 aa).

Residues 1–110 (MEELEKTQKF…PSFSSSSSTP (110 aa)) form a disordered region. The Cytoplasmic segment spans residues 1-121 (MEELEKTQKF…ESKWASLIRK (121 aa)). The span at 24 to 66 (SSPINFEMSSRSSLHSLPQTTIESPPDSPTLSSIPDSHGSSPH) shows a compositional bias: polar residues. Positions 85 to 97 (NGEEEKKVSESRR) are enriched in basic and acidic residues. The span at 100-110 (RPSFSSSSSTP) shows a compositional bias: low complexity. The chain crosses the membrane as a helical span at residues 122–142 (ALLGFRVIAFVSCLVSFSVMV). Residues 143–161 (SDRDKGWAHDSFYNYKEFR) are Extracellular-facing. Residues 162–182 (FCLAANVIGFVYSGFMICDLV) traverse the membrane as a helical segment. At 183 to 198 (YLLSTSIRRSRHNLRH) the chain is on the cytoplasmic side. A helical transmembrane segment spans residues 199–221 (FLEFGLDQMLAYLLASASTSASI). Topologically, residues 222–246 (RVDDWQSNWGADKFPDLARASVALS) are extracellular. Residues 247–267 (YVSFVAFAFCSLASGYALCAL) traverse the membrane as a helical segment. Topologically, residues 268 to 270 (RSI) are cytoplasmic.

This sequence belongs to the Casparian strip membrane proteins (CASP) family. As to quaternary structure, homodimer and heterodimers.

It is found in the cell membrane. The protein is CASP-like protein 4A1 of Arabidopsis thaliana (Mouse-ear cress).